The chain runs to 112 residues: ATP synthase epsilon chain (112 aa).

It belongs to the ATPase epsilon chain family. F-type ATPases have 2 components, CF(1) - the catalytic core - and CF(0) - the membrane proton channel. CF(1) has five subunits: alpha(3), beta(3), gamma(1), delta(1), epsilon(1). CF(0) has three main subunits: a, b and c.

The protein resides in the cell membrane. Its function is as follows. Produces ATP from ADP in the presence of a proton gradient across the membrane. This is ATP synthase epsilon chain from Rickettsia africae (strain ESF-5).